The primary structure comprises 164 residues: Peptidyl-prolyl cis-trans isomerase A (164 aa).

The residue at position 1 (M1) is an N-acetylmethionine. V2 carries the N-acetylvaline; in Peptidyl-prolyl cis-trans isomerase A, N-terminally processed modification. In terms of domain architecture, PPIase cyclophilin-type spans 7 to 163 (FFDITADGEP…KKITISDCGQ (157 aa)). An N6-acetyllysine; alternate modification is found at K28. Residue K28 forms a Glycyl lysine isopeptide (Lys-Gly) (interchain with G-Cter in SUMO2); alternate linkage. K28 participates in a covalent cross-link: Glycyl lysine isopeptide (Lys-Gly) (interchain with G-Cter in ubiquitin); alternate. 2 positions are modified to N6-acetyllysine: K44 and K76. At S77 the chain carries Phosphoserine. N6-acetyllysine; alternate is present on K82. A Glycyl lysine isopeptide (Lys-Gly) (interchain with G-Cter in SUMO2); alternate cross-link involves residue K82. T93 is subject to Phosphothreonine. N108 is a glycosylation site (N-linked (GlcNAc...) asparagine). K125, K131, and K133 each carry N6-acetyllysine.

The protein belongs to the cyclophilin-type PPIase family. PPIase A subfamily. As to quaternary structure, interacts with protein phosphatase PPP3CA/calcineurin A. Interacts with isoform 2 of BSG/CD147. Interacts with FOXO1; the interaction promotes FOXO1 dephosphorylation, nuclear accumulation and transcriptional activity. Interacts with integrin ITGA2B:ITGB3; the interaction is ROS and peptidyl-prolyl cis-trans isomerase (PPIase) activity-dependent and is increased in the presence of thrombin. Interacts with MAP3K5. Interacts with TARDBP; the interaction is dependent on the RNA-binding activity of TARDBP and the PPIase activity of PPIA/CYPA and the acetylation of PPIA/CYPA at Lys-125 favors the interaction. Interacts with HNRNPA1, HNRNPA2B1, HNRNPC, RBMX, HNRNPK and HNRNPM. Post-translationally, acetylation at Lys-125 markedly inhibits catalysis of cis to trans isomerization. PPIA acetylation also antagonizes the immunosuppressive effects of cyclosporine by inhibiting the sequential steps of cyclosporine binding and calcineurin inhibition. Acetylation at Lys-125 favors the interaction with TARDBP.

Its subcellular location is the cytoplasm. The protein resides in the secreted. The protein localises to the nucleus. It carries out the reaction [protein]-peptidylproline (omega=180) = [protein]-peptidylproline (omega=0). With respect to regulation, binds cyclosporin A (CsA). CsA mediates some of its effects via an inhibitory action on PPIase. In terms of biological role, catalyzes the cis-trans isomerization of proline imidic peptide bonds in oligopeptides. Exerts a strong chemotactic effect on leukocytes partly through activation of one of its membrane receptors BSG/CD147, initiating a signaling cascade that culminates in MAPK/ERK activation. Activates endothelial cells (ECs) in a proinflammatory manner by stimulating activation of NF-kappa-B and ERK, JNK and p38 MAP-kinases and by inducing expression of adhesion molecules including SELE and VCAM1. Induces apoptosis in ECs by promoting the FOXO1-dependent expression of CCL2 and BCL2L11 which are involved in EC chemotaxis and apoptosis. In response to oxidative stress, initiates proapoptotic and antiapoptotic signaling in ECs via activation of NF-kappa-B and AKT1 and up-regulation of antiapoptotic protein BCL2. Negatively regulates MAP3K5/ASK1 kinase activity, autophosphorylation and oxidative stress-induced apoptosis mediated by MAP3K5/ASK1. Necessary for the assembly of TARDBP in heterogeneous nuclear ribonucleoprotein (hnRNP) complexes and regulates TARDBP binding to RNA UG repeats and TARDBP-dependent expression of HDAC6, ATG7 and VCP which are involved in clearance of protein aggregates. Plays an important role in platelet activation and aggregation. Regulates calcium mobilization and integrin ITGA2B:ITGB3 bidirectional signaling via increased ROS production as well as by facilitating the interaction between integrin and the cell cytoskeleton. Binds heparan sulfate glycosaminoglycans. The sequence is that of Peptidyl-prolyl cis-trans isomerase A (Ppia) from Rattus norvegicus (Rat).